A 314-amino-acid chain; its full sequence is Olfactory receptor 52B4 (314 aa).

Residues 1 to 27 (MPTVNHSGTSHTVFHLLGIPGLQDQHM) are Extracellular-facing. A glycan (N-linked (GlcNAc...) asparagine) is linked at N5. The chain crosses the membrane as a helical span at residues 28 to 48 (WISIPFFISYVTALLGNSLLI). Residues 49-56 (FIILTKRS) are Cytoplasmic-facing. Residues 57–77 (LHEPMYLFLCMLAGADIVLST) traverse the membrane as a helical segment. The Extracellular segment spans residues 78 to 101 (CTIPQALAIFWFRAGDISLDRCIT). C99 and C191 are oxidised to a cystine. The helical transmembrane segment at 102-122 (QLFFIHSTFISESGILLVMAF) threads the bilayer. The Cytoplasmic portion of the chain corresponds to 123–141 (DHYIAICYPLRYTTILTNA). A helical transmembrane segment spans residues 142–162 (LIKKICVTVSLRSYGTIFPII). The Extracellular segment spans residues 163 to 198 (FLLKRLTFCQNNIIPHTFCEHIGLAKYACNDIRINI). The helical transmembrane segment at 199–219 (WYGFSILMSTVVLDVVLIFIS) threads the bilayer. At 220-239 (YMLILHAVFHMPSPDACHKA) the chain is on the cytoplasmic side. A helical transmembrane segment spans residues 240-260 (LNTFGSHVCIIILFYGSGIFT). The Extracellular segment spans residues 261-275 (ILTQRFGRHIPPCIH). A helical membrane pass occupies residues 276–296 (IPLANVCILAPPMLNPIIYGI). Residues 297-314 (KTKQIQEQVVQFLFIKQK) lie on the Cytoplasmic side of the membrane.

This sequence belongs to the G-protein coupled receptor 1 family.

The protein resides in the cell membrane. Its function is as follows. Odorant receptor. In Homo sapiens (Human), this protein is Olfactory receptor 52B4 (OR52B4).